We begin with the raw amino-acid sequence, 451 residues long: Chaperone SurA (451 aa).

Residues 1 to 26 form the signal peptide; it reads MKKIIPTNLFKLISILFILTPFFAWS. PpiC domains are found at residues 179 to 280 and 290 to 388; these read DVEY…QLQG and KQYH…FLDG.

The protein localises to the periplasm. The enzyme catalyses [protein]-peptidylproline (omega=180) = [protein]-peptidylproline (omega=0). Functionally, chaperone involved in the correct folding and assembly of outer membrane proteins. Recognizes specific patterns of aromatic residues and the orientation of their side chains, which are found more frequently in integral outer membrane proteins. May act in both early periplasmic and late outer membrane-associated steps of protein maturation. The polypeptide is Chaperone SurA (Hydrogenovibrio crunogenus (strain DSM 25203 / XCL-2) (Thiomicrospira crunogena)).